The sequence spans 309 residues: Syndecan-1 (309 aa).

The N-terminal stretch at 1 to 22 (MRRAALWLWLCALALRLQPVLP) is a signal peptide. The Extracellular portion of the chain corresponds to 24–253 (IMAVNVPPED…GLLDRKEVLG (230 aa)). Disordered regions lie at residues 28–57 (NVPPEDQDGSGDDSDNFSGSGTGALPDITL) and 142–185 (ARAT…GGTS). Residues 32–42 (EDQDGSGDDSD) show a composition bias toward acidic residues. A glycan (O-linked (Xyl...) (chondroitin sulfate) serine) is linked at serine 37. Asparagine 43 carries an N-linked (GlcNAc...) asparagine glycan. Serine 45 and serine 47 each carry an O-linked (Xyl...) (heparan sulfate) serine glycan. A compositionally biased stretch (polar residues) spans 142-151 (ARATTAQAPV). O-linked (Xyl...) (chondroitin sulfate) serine glycosylation is found at serine 205 and serine 215. The helical transmembrane segment at 254 to 274 (GVIAGGLVGLIFAVCLVGFML) threads the bilayer. Topologically, residues 275–309 (YRMKKKDEGSYSLEEPKQANGGAYQKPTKQEEFYA) are cytoplasmic. The segment at 283-309 (GSYSLEEPKQANGGAYQKPTKQEEFYA) is disordered. A Phosphoserine modification is found at serine 284.

It belongs to the syndecan proteoglycan family. As to quaternary structure, interacts with CDCP1. Interacts (via C-terminus) with TIAM1 (via PDZ domain). Interacts with MDK. Shedding is enhanced by a number of factors such as heparanase, thrombin or EGF. Also by stress and wound healing. PMA-mediated shedding is inhibited by TIMP3.

The protein localises to the membrane. The protein resides in the secreted. It localises to the extracellular exosome. Its function is as follows. Cell surface proteoglycan that contains both heparan sulfate and chondroitin sulfate and that links the cytoskeleton to the interstitial matrix. Regulates exosome biogenesis in concert with SDCBP and PDCD6IP. Able to induce its own expression in dental mesenchymal cells and also in the neighboring dental epithelial cells via an MSX1-mediated pathway. This is Syndecan-1 from Cricetulus griseus (Chinese hamster).